The following is a 169-amino-acid chain: NADH-quinone oxidoreductase subunit I (169 aa).

4Fe-4S ferredoxin-type domains are found at residues 61-90 (RKYKNGEERCIACKLCEAICPAQAITIEAQ) and 100-129 (VRYDIDMTKCIYCGFCQEACPVDAIVEGPN). [4Fe-4S] cluster-binding residues include cysteine 70, cysteine 73, cysteine 76, cysteine 80, cysteine 109, cysteine 112, cysteine 115, and cysteine 119.

This sequence belongs to the complex I 23 kDa subunit family. NDH-1 is composed of 14 different subunits. Subunits NuoA, H, J, K, L, M, N constitute the membrane sector of the complex. It depends on [4Fe-4S] cluster as a cofactor.

Its subcellular location is the cell inner membrane. It carries out the reaction a quinone + NADH + 5 H(+)(in) = a quinol + NAD(+) + 4 H(+)(out). In terms of biological role, NDH-1 shuttles electrons from NADH, via FMN and iron-sulfur (Fe-S) centers, to quinones in the respiratory chain. The immediate electron acceptor for the enzyme in this species is believed to be ubiquinone. Couples the redox reaction to proton translocation (for every two electrons transferred, four hydrogen ions are translocated across the cytoplasmic membrane), and thus conserves the redox energy in a proton gradient. This Ehrlichia chaffeensis (strain ATCC CRL-10679 / Arkansas) protein is NADH-quinone oxidoreductase subunit I.